Here is an 84-residue protein sequence, read N- to C-terminus: Small ribosomal subunit protein uS17 (84 aa).

The protein belongs to the universal ribosomal protein uS17 family. In terms of assembly, part of the 30S ribosomal subunit.

In terms of biological role, one of the primary rRNA binding proteins, it binds specifically to the 5'-end of 16S ribosomal RNA. The sequence is that of Small ribosomal subunit protein uS17 from Borreliella burgdorferi (strain ATCC 35210 / DSM 4680 / CIP 102532 / B31) (Borrelia burgdorferi).